The sequence spans 795 residues: Protocadherin beta-4 (795 aa).

The signal sequence occupies residues 1-27 (MKKLGRIHPNRQVLAFILMVFLSQVRL). Over 28-689 (EPIRYSVLEE…AQADSLTVYL (662 aa)) the chain is Extracellular. Cadherin domains lie at 34–132 (VLEE…SPIF), 137–241 (VLLK…APEF), 246–346 (YGVQ…PPEL), 351–450 (LTSS…APAF), and 455–560 (YTLF…SPFV). N-linked (GlcNAc...) asparagine glycosylation is present at N183. N-linked (GlcNAc...) asparagine glycans are attached at residues N417 and N435. N566 carries an N-linked (GlcNAc...) asparagine glycan. Residues 567 to 670 (GSAPCTELVP…LVDGFSQPYL (104 aa)) form the Cadherin 6 domain. The chain crosses the membrane as a helical span at residues 690 to 710 (VVALASVSSLFLFSVLLFVAV). Topologically, residues 711-795 (RLCRRSRAAS…PKFRNSLVFS (85 aa)) are cytoplasmic.

Its subcellular location is the cell membrane. Functionally, potential calcium-dependent cell-adhesion protein. May be involved in the establishment and maintenance of specific neuronal connections in the brain. This Homo sapiens (Human) protein is Protocadherin beta-4 (PCDHB4).